The chain runs to 170 residues: Protein SprT (170 aa).

The SprT-like domain occupies 22–163 (LQQANLTLQT…RCRRCGKTLR (142 aa)). Zn(2+) is bound at residue H78. E79 is a catalytic residue. H82 lines the Zn(2+) pocket.

The protein belongs to the SprT family. Zn(2+) is required as a cofactor.

Its subcellular location is the cytoplasm. In Pectobacterium carotovorum subsp. carotovorum (strain PC1), this protein is Protein SprT.